The following is a 3546-amino-acid chain: Ubiquitin carboxyl-terminal hydrolase 34 (3546 aa).

Phosphoserine is present on residues Ser-352, Ser-486, Ser-487, and Ser-490. Disordered regions lie at residues Lys-502–Ser-535, Val-550–Thr-679, and Thr-1459–Glu-1478. Residues Ala-511–Ser-524 show a composition bias toward low complexity. Composition is skewed to polar residues over residues Asp-525–Gly-534 and Ser-560–Asn-570. The segment covering Ser-571–Ser-590 has biased composition (low complexity). Residues Asn-591–Val-609 show a composition bias toward polar residues. Residues Gln-610–Asp-627 are compositionally biased toward acidic residues. At Ser-649 the chain carries Phosphoserine. A compositionally biased stretch (polar residues) spans Gln-659–Thr-671. The segment covering Pro-1467–Val-1477 has biased composition (acidic residues). Residue Ser-1469 is modified to Phosphoserine. The 346-residue stretch at Val-1894 to Met-2239 folds into the USP domain. Catalysis depends on Cys-1903, which acts as the Nucleophile. The Proton acceptor role is filled by His-2164. Ser-2488 bears the Phosphoserine mark. Positions Asn-3331–Arg-3443 are disordered. Residues Gln-3336–Glu-3347 are compositionally biased toward basic and acidic residues. 2 positions are modified to phosphoserine: Ser-3358 and Ser-3359. Thr-3381 carries the phosphothreonine modification. A phosphoserine mark is found at Ser-3386 and Ser-3406. Residues Ser-3421–Ser-3432 are compositionally biased toward polar residues. Basic and acidic residues predominate over residues Gln-3433–Arg-3443. Residue Ser-3503 is modified to Phosphoserine.

It belongs to the peptidase C19 family. Interacts with AXIN1 and AXIN2. In terms of tissue distribution, expressed in brain at low level.

It catalyses the reaction Thiol-dependent hydrolysis of ester, thioester, amide, peptide and isopeptide bonds formed by the C-terminal Gly of ubiquitin (a 76-residue protein attached to proteins as an intracellular targeting signal).. In terms of biological role, ubiquitin hydrolase that can remove conjugated ubiquitin from AXIN1 and AXIN2, thereby acting as a regulator of Wnt signaling pathway. Acts as an activator of the Wnt signaling pathway downstream of the beta-catenin destruction complex by deubiquitinating and stabilizing AXIN1 and AXIN2, leading to promote nuclear accumulation of AXIN1 and AXIN2 and positively regulate beta-catenin (CTNBB1)-mediated transcription. Recognizes and hydrolyzes the peptide bond at the C-terminal Gly of ubiquitin. Involved in the processing of poly-ubiquitin precursors as well as that of ubiquitinated proteins. This chain is Ubiquitin carboxyl-terminal hydrolase 34 (USP34), found in Homo sapiens (Human).